The chain runs to 915 residues: Probable dipeptidyl-aminopeptidase B (915 aa).

2 disordered regions span residues 1–20 (MAGE…TRGS) and 52–74 (QDSR…NEEE). Residues 1 to 95 (MAGEKGGSRD…GGKTVQKTTK (95 aa)) lie on the Cytoplasmic side of the membrane. The segment covering 55–72 (RLGEKDQRDDDHDQYRNE) has biased composition (basic and acidic residues). Residues 96-116 (IVLWALLFLCVGGWSLAFVIF) form a helical; Signal-anchor for type II membrane protein membrane-spanning segment. The Vacuolar segment spans residues 117-915 (LFRGHDTPQT…RAETWGGLPV (799 aa)). Asn-133, Asn-179, Asn-349, and Asn-572 each carry an N-linked (GlcNAc...) asparagine glycan. Catalysis depends on Ser-754, which acts as the Charge relay system. Asn-813 is a glycosylation site (N-linked (GlcNAc...) asparagine). Residues Asp-831 and His-864 each act as charge relay system in the active site. Asn-900 carries an N-linked (GlcNAc...) asparagine glycan.

Belongs to the peptidase S9B family.

The protein resides in the vacuole membrane. The catalysed reaction is Release of an N-terminal dipeptide, Xaa-Yaa-|-Zaa-, from a polypeptide, preferentially when Yaa is Pro, provided Zaa is neither Pro nor hydroxyproline.. Functionally, type IV dipeptidyl-peptidase which removes N-terminal dipeptides sequentially from polypeptides having unsubstituted N-termini provided that the penultimate residue is proline. The sequence is that of Probable dipeptidyl-aminopeptidase B (DAPB) from Blastomyces gilchristii (strain SLH14081) (Blastomyces dermatitidis).